The primary structure comprises 73 residues: uncharacterized protein (73 aa).

The signal sequence occupies residues 1 to 30; the sequence is MVDFYFIEEKVAYRAAFTTTGKIAATLGLA.

This is an uncharacterized protein from Archaeoglobus fulgidus (strain ATCC 49558 / DSM 4304 / JCM 9628 / NBRC 100126 / VC-16).